A 341-amino-acid polypeptide reads, in one-letter code: NADH-ubiquinone oxidoreductase chain 2 (341 aa).

Transmembrane regions (helical) follow at residues 8–28, 60–80, 95–115, 121–141, 146–166, 195–215, 238–258, 273–293, and 321–341; these read ILFI…NSWL, YFLT…LLML, MIIM…FWFP, LTWM…LMLI, IKYL…IGGL, SIWL…TFMF, FTLF…GFLP, FMLT…LRIC, and MIMT…YFMF.

This sequence belongs to the complex I subunit 2 family.

It is found in the mitochondrion inner membrane. The enzyme catalyses a ubiquinone + NADH + 5 H(+)(in) = a ubiquinol + NAD(+) + 4 H(+)(out). Its function is as follows. Core subunit of the mitochondrial membrane respiratory chain NADH dehydrogenase (Complex I) that is believed to belong to the minimal assembly required for catalysis. Complex I functions in the transfer of electrons from NADH to the respiratory chain. The immediate electron acceptor for the enzyme is believed to be ubiquinone. This chain is NADH-ubiquinone oxidoreductase chain 2 (mt:ND2), found in Drosophila melanogaster (Fruit fly).